The primary structure comprises 917 residues: Isoleucine--tRNA ligase (917 aa).

The 'HIGH' region motif lies at 59–69; that stretch reads PYANGHIHIGH. An L-isoleucyl-5'-AMP-binding site is contributed by E569. The short motif at 610–614 is the 'KMSKS' region element; that stretch reads KMSKS. Residue K613 participates in ATP binding. Zn(2+) is bound by residues C890, C893, C905, and C908.

The protein belongs to the class-I aminoacyl-tRNA synthetase family. IleS type 1 subfamily. Monomer. It depends on Zn(2+) as a cofactor.

Its subcellular location is the cytoplasm. The enzyme catalyses tRNA(Ile) + L-isoleucine + ATP = L-isoleucyl-tRNA(Ile) + AMP + diphosphate. Functionally, catalyzes the attachment of isoleucine to tRNA(Ile). As IleRS can inadvertently accommodate and process structurally similar amino acids such as valine, to avoid such errors it has two additional distinct tRNA(Ile)-dependent editing activities. One activity is designated as 'pretransfer' editing and involves the hydrolysis of activated Val-AMP. The other activity is designated 'posttransfer' editing and involves deacylation of mischarged Val-tRNA(Ile). In Campylobacter jejuni subsp. jejuni serotype O:2 (strain ATCC 700819 / NCTC 11168), this protein is Isoleucine--tRNA ligase.